Consider the following 286-residue polypeptide: Polyamine aminopropyltransferase (286 aa).

The PABS domain occupies 5–238 (TMWHETLHDQ…GIMTFAWATD (234 aa)). Gln-33 provides a ligand contact to S-methyl-5'-thioadenosine. Spermidine-binding residues include His-64 and Asp-88. Residues Glu-108 and 140 to 141 (DG) each bind S-methyl-5'-thioadenosine. Asp-158 serves as the catalytic Proton acceptor. 158 to 161 (DCTD) is a binding site for spermidine. Pro-165 contacts S-methyl-5'-thioadenosine.

It belongs to the spermidine/spermine synthase family. As to quaternary structure, homodimer or homotetramer.

The protein localises to the cytoplasm. The catalysed reaction is S-adenosyl 3-(methylsulfanyl)propylamine + putrescine = S-methyl-5'-thioadenosine + spermidine + H(+). Its pathway is amine and polyamine biosynthesis; spermidine biosynthesis; spermidine from putrescine: step 1/1. Functionally, catalyzes the irreversible transfer of a propylamine group from the amino donor S-adenosylmethioninamine (decarboxy-AdoMet) to putrescine (1,4-diaminobutane) to yield spermidine. The protein is Polyamine aminopropyltransferase of Salmonella enteritidis PT4 (strain P125109).